Consider the following 295-residue polypeptide: Protease HtpX (295 aa).

Helical transmembrane passes span 4 to 24 (ILLF…TLSL) and 42 to 62 (QLLV…LFIS). Zn(2+) is bound at residue His147. Glu148 is an active-site residue. His151 contacts Zn(2+). 2 helical membrane passes run 158–178 (VTLA…ARII) and 199–219 (ITTI…VMWF). Glu224 provides a ligand contact to Zn(2+).

This sequence belongs to the peptidase M48B family. The cofactor is Zn(2+).

The protein resides in the cell inner membrane. In Pseudomonas syringae pv. tomato (strain ATCC BAA-871 / DC3000), this protein is Protease HtpX.